The sequence spans 307 residues: Transaldolase (307 aa).

The Schiff-base intermediate with substrate role is filled by lysine 125.

It belongs to the transaldolase family. Type 1 subfamily. As to quaternary structure, homodimer.

The protein localises to the cytoplasm. It carries out the reaction D-sedoheptulose 7-phosphate + D-glyceraldehyde 3-phosphate = D-erythrose 4-phosphate + beta-D-fructose 6-phosphate. Its pathway is carbohydrate degradation; pentose phosphate pathway; D-glyceraldehyde 3-phosphate and beta-D-fructose 6-phosphate from D-ribose 5-phosphate and D-xylulose 5-phosphate (non-oxidative stage): step 2/3. Functionally, transaldolase is important for the balance of metabolites in the pentose-phosphate pathway. This is Transaldolase from Pseudomonas paraeruginosa (strain DSM 24068 / PA7) (Pseudomonas aeruginosa (strain PA7)).